The following is an 858-amino-acid chain: Protein VACUOLELESS1 (858 aa).

It belongs to the VPS16 family. In terms of assembly, core component of at least two putative endosomal tethering complexes, the homotypic fusion and vacuole protein sorting (HOPS) complex and the class C core vacuole/endosome tethering (CORVET) complex. Their common core is composed of the class C Vps proteins VPS11, VCL1, VPS18 and VPS33, which in HOPS further associates with VPS39 and VPS41 and in CORVET with VPS3. As to expression, expressed in roots, leaves, stems, siliques, flowers and mature pollen.

The protein resides in the vacuole membrane. The protein localises to the prevacuolar compartment membrane. In terms of biological role, required for vacuole biogenesis and vacuole enlargment in dividing and expanding cells. Involved in the docking or fusion of prevacuolar vesicles. Important for the function of both male and female gametophytes, but is not essential for the germination and development of pollen. This is Protein VACUOLELESS1 (VCL1) from Arabidopsis thaliana (Mouse-ear cress).